The following is a 2285-amino-acid chain: Protein Ycf2 (2285 aa).

1638–1645 is a binding site for ATP; it reads GSIGTGRS.

The protein belongs to the Ycf2 family.

It localises to the plastid. Its subcellular location is the chloroplast stroma. Probable ATPase of unknown function. Its presence in a non-photosynthetic plant (Epifagus virginiana) and experiments in tobacco indicate that it has an essential function which is probably not related to photosynthesis. The protein is Protein Ycf2 of Populus trichocarpa (Western balsam poplar).